The chain runs to 213 residues: Thymidylate kinase (213 aa).

10-17 (GLEGAGKT) is an ATP binding site.

Belongs to the thymidylate kinase family.

The catalysed reaction is dTMP + ATP = dTDP + ADP. Phosphorylation of dTMP to form dTDP in both de novo and salvage pathways of dTTP synthesis. This is Thymidylate kinase from Salmonella arizonae (strain ATCC BAA-731 / CDC346-86 / RSK2980).